The primary structure comprises 1430 residues: ABC transporter eupT (1430 aa).

The tract at residues M1–Q26 is disordered. An ABC transporter 1 domain is found at L112–A368. Residue N292 is glycosylated (N-linked (GlcNAc...) asparagine). 5 helical membrane-spanning segments follow: residues W476–F496, V511–L531, V557–F577, G586–F606, and M620–V640. N-linked (GlcNAc...) asparagine glycosylation is present at N684. Residues V707–Y727 form a helical membrane-spanning segment. Residues F789–G1032 form the ABC transporter 2 domain. Residue G825–T832 participates in ATP binding. Residue N1019 is glycosylated (N-linked (GlcNAc...) asparagine). 6 helical membrane-spanning segments follow: residues I1133 to S1153, L1213 to F1233, L1249 to I1269, G1278 to S1298, F1305 to T1325, and F1400 to I1420.

It belongs to the ABC transporter superfamily. ABCG family. PDR (TC 3.A.1.205) subfamily.

It is found in the cell membrane. ABC transporter; part of the gene cluster that mediates the biosynthesis of eupenifeldin, a bistropolone meroterpenoid that acts as an antitumor agent. This chain is ABC transporter eupT, found in Phoma sp.